The following is a 376-amino-acid chain: Chaperone protein DnaJ (376 aa).

Residues 5–70 (DYYEVLGVAK…QKRAAYDQYG (66 aa)) form the J domain. A CR-type zinc finger spans residues 136–214 (GYDTQIRVPS…CHGSGKVKET (79 aa)). Residues C149, C152, C166, C169, C188, C191, C202, and C205 each coordinate Zn(2+). 4 CXXCXGXG motif repeats span residues 149 to 156 (CGICHGSG), 166 to 173 (CPTCHGQG), 188 to 195 (CPKCHGTG), and 202 to 209 (CVHCHGSG).

It belongs to the DnaJ family. As to quaternary structure, homodimer. Requires Zn(2+) as cofactor.

Its subcellular location is the cytoplasm. Functionally, participates actively in the response to hyperosmotic and heat shock by preventing the aggregation of stress-denatured proteins and by disaggregating proteins, also in an autonomous, DnaK-independent fashion. Unfolded proteins bind initially to DnaJ; upon interaction with the DnaJ-bound protein, DnaK hydrolyzes its bound ATP, resulting in the formation of a stable complex. GrpE releases ADP from DnaK; ATP binding to DnaK triggers the release of the substrate protein, thus completing the reaction cycle. Several rounds of ATP-dependent interactions between DnaJ, DnaK and GrpE are required for fully efficient folding. Also involved, together with DnaK and GrpE, in the DNA replication of plasmids through activation of initiation proteins. This Burkholderia thailandensis (strain ATCC 700388 / DSM 13276 / CCUG 48851 / CIP 106301 / E264) protein is Chaperone protein DnaJ.